Consider the following 271-residue polypeptide: Formamidopyrimidine-DNA glycosylase (271 aa).

The active-site Schiff-base intermediate with DNA is the P2. E3 functions as the Proton donor in the catalytic mechanism. The active-site Proton donor; for beta-elimination activity is the K58. DNA is bound by residues H91, R110, and R152. The FPG-type zinc finger occupies 237 to 271 (RVYGRTGLACMACETPVKQIVQGNRSTYYCPACQR). R261 functions as the Proton donor; for delta-elimination activity in the catalytic mechanism.

Belongs to the FPG family. In terms of assembly, monomer. Zn(2+) is required as a cofactor.

It carries out the reaction Hydrolysis of DNA containing ring-opened 7-methylguanine residues, releasing 2,6-diamino-4-hydroxy-5-(N-methyl)formamidopyrimidine.. The enzyme catalyses 2'-deoxyribonucleotide-(2'-deoxyribose 5'-phosphate)-2'-deoxyribonucleotide-DNA = a 3'-end 2'-deoxyribonucleotide-(2,3-dehydro-2,3-deoxyribose 5'-phosphate)-DNA + a 5'-end 5'-phospho-2'-deoxyribonucleoside-DNA + H(+). In terms of biological role, involved in base excision repair of DNA damaged by oxidation or by mutagenic agents. Acts as a DNA glycosylase that recognizes and removes damaged bases. Has a preference for oxidized purines, such as 7,8-dihydro-8-oxoguanine (8-oxoG). Has AP (apurinic/apyrimidinic) lyase activity and introduces nicks in the DNA strand. Cleaves the DNA backbone by beta-delta elimination to generate a single-strand break at the site of the removed base with both 3'- and 5'-phosphates. This Thioalkalivibrio sulfidiphilus (strain HL-EbGR7) protein is Formamidopyrimidine-DNA glycosylase.